A 207-amino-acid polypeptide reads, in one-letter code: Ribosomal RNA small subunit methyltransferase G (207 aa).

Residues Gly-73, Leu-78, 124 to 125 (VE), and Arg-139 contribute to the S-adenosyl-L-methionine site.

The protein belongs to the methyltransferase superfamily. RNA methyltransferase RsmG family.

Its subcellular location is the cytoplasm. It carries out the reaction guanosine(527) in 16S rRNA + S-adenosyl-L-methionine = N(7)-methylguanosine(527) in 16S rRNA + S-adenosyl-L-homocysteine. Specifically methylates the N7 position of guanine in position 527 of 16S rRNA. This Shigella flexneri protein is Ribosomal RNA small subunit methyltransferase G.